We begin with the raw amino-acid sequence, 304 residues long: Acetyl-coenzyme A carboxylase carboxyl transferase subunit beta (304 aa).

The CoA carboxyltransferase N-terminal domain maps to leucine 29 to proline 298. Cysteine 33, cysteine 36, cysteine 52, and cysteine 55 together coordinate Zn(2+). The C4-type zinc-finger motif lies at cysteine 33–cysteine 55.

The protein belongs to the AccD/PCCB family. In terms of assembly, acetyl-CoA carboxylase is a heterohexamer composed of biotin carboxyl carrier protein (AccB), biotin carboxylase (AccC) and two subunits each of ACCase subunit alpha (AccA) and ACCase subunit beta (AccD). The cofactor is Zn(2+).

The protein resides in the cytoplasm. It carries out the reaction N(6)-carboxybiotinyl-L-lysyl-[protein] + acetyl-CoA = N(6)-biotinyl-L-lysyl-[protein] + malonyl-CoA. It participates in lipid metabolism; malonyl-CoA biosynthesis; malonyl-CoA from acetyl-CoA: step 1/1. In terms of biological role, component of the acetyl coenzyme A carboxylase (ACC) complex. Biotin carboxylase (BC) catalyzes the carboxylation of biotin on its carrier protein (BCCP) and then the CO(2) group is transferred by the transcarboxylase to acetyl-CoA to form malonyl-CoA. This Acaryochloris marina (strain MBIC 11017) protein is Acetyl-coenzyme A carboxylase carboxyl transferase subunit beta.